The sequence spans 106 residues: Transcription initiation factor IIA subunit 2 (106 aa).

This sequence belongs to the TFIIA subunit 2 family. As to quaternary structure, TFIIA is a heterodimer of the large unprocessed subunit 1 and a small subunit gamma. It was originally believed to be a heterotrimer of an alpha, a beta and a gamma subunit.

The protein resides in the nucleus. Its function is as follows. TFIIA is a component of the transcription machinery of RNA polymerase II and plays an important role in transcriptional activation. TFIIA in a complex with TBP mediates transcriptional activity. Protein involved in the resistance to X.oryzae. In Oryza sativa subsp. indica (Rice), this protein is Transcription initiation factor IIA subunit 2 (TFIIAy).